We begin with the raw amino-acid sequence, 86 residues long: Putative membrane protein insertion efficiency factor (86 aa).

The protein belongs to the UPF0161 family.

The protein resides in the cell inner membrane. In terms of biological role, could be involved in insertion of integral membrane proteins into the membrane. This Pseudomonas aeruginosa (strain LESB58) protein is Putative membrane protein insertion efficiency factor.